The chain runs to 78 residues: Large ribosomal subunit protein uL24 (78 aa).

A disordered region spans residues 52-78 (PSEKTPNGGHVNKEMPIDISNVAKVEG).

It belongs to the universal ribosomal protein uL24 family. In terms of assembly, part of the 50S ribosomal subunit.

In terms of biological role, one of two assembly initiator proteins, it binds directly to the 5'-end of the 23S rRNA, where it nucleates assembly of the 50S subunit. Functionally, one of the proteins that surrounds the polypeptide exit tunnel on the outside of the subunit. This Campylobacter concisus (strain 13826) protein is Large ribosomal subunit protein uL24.